A 357-amino-acid polypeptide reads, in one-letter code: Alanine racemase, catabolic (357 aa).

The active-site Proton acceptor; specific for D-alanine is the lysine 33. Lysine 33 is subject to N6-(pyridoxal phosphate)lysine. Lysine 122 bears the N6-carboxylysine mark. Arginine 129 is a binding site for substrate. Tyrosine 253 (proton acceptor; specific for L-alanine) is an active-site residue. Methionine 301 contributes to the substrate binding site.

The protein belongs to the alanine racemase family. Homodimer. Pyridoxal 5'-phosphate is required as a cofactor.

The enzyme catalyses L-alanine = D-alanine. Isomerizes L-alanine to D-alanine which is then oxidized to pyruvate by DadA. The sequence is that of Alanine racemase, catabolic from Pseudomonas aeruginosa (strain ATCC 15692 / DSM 22644 / CIP 104116 / JCM 14847 / LMG 12228 / 1C / PRS 101 / PAO1).